A 185-amino-acid polypeptide reads, in one-letter code: Urease accessory protein UreE (185 aa).

The disordered stretch occupies residues Leu-153 to His-185. Residues Gly-162 to His-175 are compositionally biased toward basic residues. Over residues His-176–His-185 the composition is skewed to basic and acidic residues.

The protein belongs to the UreE family.

It localises to the cytoplasm. Involved in urease metallocenter assembly. Binds nickel. Probably functions as a nickel donor during metallocenter assembly. The sequence is that of Urease accessory protein UreE from Haemophilus influenzae (strain 86-028NP).